Here is a 127-residue protein sequence, read N- to C-terminus: Protein ApaG (127 aa).

Positions 3–127 constitute an ApaG domain; that stretch reads DADVYAISVE…FVLAIPRTLH (125 aa).

The protein is Protein ApaG of Stenotrophomonas maltophilia (strain K279a).